Consider the following 188-residue polypeptide: Mitochondrial import inner membrane translocase subunit Tim23B (188 aa).

2 consecutive transmembrane segments (helical) span residues 73–93 (FELA…FGAM) and 125–145 (ALWA…GVII).

Belongs to the Tim17/Tim22/Tim23 family.

The protein localises to the mitochondrion inner membrane. May participate in the translocation of transit peptide-containing proteins across the mitochondrial inner membrane. the PAM complex. The sequence is that of Mitochondrial import inner membrane translocase subunit Tim23B from Homo sapiens (Human).